The following is a 288-amino-acid chain: Pirin-like protein CC_3178 (288 aa).

The protein belongs to the pirin family.

In Caulobacter vibrioides (strain ATCC 19089 / CIP 103742 / CB 15) (Caulobacter crescentus), this protein is Pirin-like protein CC_3178.